We begin with the raw amino-acid sequence, 489 residues long: Protein MGF 505-2R (489 aa).

This sequence belongs to the asfivirus MGF 505 family.

In terms of biological role, plays a role in virus cell tropism, and may be required for efficient virus replication in macrophages. The polypeptide is Protein MGF 505-2R (Ornithodoros (relapsing fever ticks)).